Consider the following 201-residue polypeptide: Ras-related protein Rab-9B (201 aa).

Residues V18, G19, K20, S21, S22, D33, S34, A36, H38, and T39 each coordinate GTP. Position 21 (S21) interacts with Mg(2+). Positions 31-42 (KFDSQAFHTIGV) match the Switch 1 motif. S34 bears the Phosphoserine mark. Mg(2+) is bound by residues T39 and D62. The Switch 2 motif lies at 64-78 (AGQERFKSLRTPFYR). The GTP site is built by G65, N124, K125, A155, and K156. Residues C200 and C201 are each lipidated (S-geranylgeranyl cysteine).

Belongs to the small GTPase superfamily. Rab family. In terms of assembly, interacts (GTP-bound form) with SGSM1; the GDP-bound form has much lower affinity for SGSM1. The GTP-bound form but not the GDP-bound form interacts with HPS4 and the BLOC-3 complex (heterodimer of HPS1 and HPS4) but does not interact with HPS1 alone. Interacts (GTP-bound form) with NDE1. Requires Mg(2+) as cofactor.

The protein resides in the cell membrane. It is found in the cytoplasmic vesicle. Its subcellular location is the phagosome membrane. The catalysed reaction is GTP + H2O = GDP + phosphate + H(+). With respect to regulation, regulated by guanine nucleotide exchange factors (GEFs) which promote the exchange of bound GDP for free GTP. Regulated by GTPase activating proteins (GAPs) which increase the GTP hydrolysis activity. Inhibited by GDP dissociation inhibitors (GDIs). Its function is as follows. The small GTPases Rab are key regulators of intracellular membrane trafficking, from the formation of transport vesicles to their fusion with membranes. Rabs cycle between an inactive GDP-bound form and an active GTP-bound form that is able to recruit to membranes different sets of downstream effectors directly responsible for vesicle formation, movement, tethering and fusion. RAB9B is involved in the transport of proteins between the endosomes and the trans Golgi network. May use NDE1/NDEL1 as an effector to interact with the dynein motor complex in order to control retrograde trafficking of RAB9-associated late endosomes to the TGN. This Mus musculus (Mouse) protein is Ras-related protein Rab-9B.